Here is a 473-residue protein sequence, read N- to C-terminus: Ribulose bisphosphate carboxylase large chain 1 (473 aa).

Residues N116 and T166 each coordinate substrate. Catalysis depends on K168, which acts as the Proton acceptor. Residue K170 coordinates substrate. The Mg(2+) site is built by K194, D196, and E197. Position 194 is an N6-carboxylysine (K194). H287 serves as the catalytic Proton acceptor. Residues R288, H320, and S372 each coordinate substrate.

It belongs to the RuBisCO large chain family. Type I subfamily. Heterohexadecamer of 8 large chains and 8 small chains. The cofactor is Mg(2+).

The enzyme catalyses 2 (2R)-3-phosphoglycerate + 2 H(+) = D-ribulose 1,5-bisphosphate + CO2 + H2O. It catalyses the reaction D-ribulose 1,5-bisphosphate + O2 = 2-phosphoglycolate + (2R)-3-phosphoglycerate + 2 H(+). RuBisCO catalyzes two reactions: the carboxylation of D-ribulose 1,5-bisphosphate, the primary event in carbon dioxide fixation, as well as the oxidative fragmentation of the pentose substrate. Both reactions occur simultaneously and in competition at the same active site. The protein is Ribulose bisphosphate carboxylase large chain 1 of Acidithiobacillus ferrooxidans (Thiobacillus ferrooxidans).